Here is a 435-residue protein sequence, read N- to C-terminus: Monodehydroascorbate reductase 3, cytosolic (435 aa).

Residues 14-17 (GGVA), Glu-41, Arg-48, Lys-53, Ile-96, and 147-148 (RE) contribute to the FAD site. Residues 172–178 (GGYIGLE), Glu-196, Arg-202, and Gly-261 each bind NAD(+). 174-178 (YIGLE) is an NADP(+) binding site. Positions 202 and 261 each coordinate NADP(+). Residue Asp-298 coordinates FAD. 314–315 (EH) lines the NAD(+) pocket. 314 to 315 (EH) contributes to the NADP(+) binding site. Residue Val-316 coordinates FAD. An L-ascorbate-binding site is contributed by Arg-320. Residue Tyr-349 coordinates FAD. Residue Tyr-349 coordinates NAD(+). Residue Tyr-349 coordinates NADP(+). Arg-351 contacts L-ascorbate.

It belongs to the FAD-dependent oxidoreductase family. FAD serves as cofactor.

The protein resides in the cytoplasm. It catalyses the reaction 2 monodehydro-L-ascorbate radical + NADH + H(+) = 2 L-ascorbate + NAD(+). Its function is as follows. Catalyzes the conversion of monodehydroascorbate to ascorbate, oxidizing NADH in the process. Ascorbate is a major antioxidant against reactive oxygen species (ROS) and nitric oxide (NO). Can use NADPH as electron donor, but possesses lower activity compared to NADH as electron donor. The sequence is that of Monodehydroascorbate reductase 3, cytosolic from Oryza sativa subsp. japonica (Rice).